The sequence spans 211 residues: Thiamine-phosphate synthase (211 aa).

4-amino-2-methyl-5-(diphosphooxymethyl)pyrimidine contacts are provided by residues 37–41 (QLRIK) and N69. Positions 70 and 89 each coordinate Mg(2+). S108 lines the 4-amino-2-methyl-5-(diphosphooxymethyl)pyrimidine pocket. 134-136 (TQT) contacts 2-[(2R,5Z)-2-carboxy-4-methylthiazol-5(2H)-ylidene]ethyl phosphate. K137 contacts 4-amino-2-methyl-5-(diphosphooxymethyl)pyrimidine. Residues G166 and 186 to 187 (VS) contribute to the 2-[(2R,5Z)-2-carboxy-4-methylthiazol-5(2H)-ylidene]ethyl phosphate site.

It belongs to the thiamine-phosphate synthase family. It depends on Mg(2+) as a cofactor.

It catalyses the reaction 2-[(2R,5Z)-2-carboxy-4-methylthiazol-5(2H)-ylidene]ethyl phosphate + 4-amino-2-methyl-5-(diphosphooxymethyl)pyrimidine + 2 H(+) = thiamine phosphate + CO2 + diphosphate. The enzyme catalyses 2-(2-carboxy-4-methylthiazol-5-yl)ethyl phosphate + 4-amino-2-methyl-5-(diphosphooxymethyl)pyrimidine + 2 H(+) = thiamine phosphate + CO2 + diphosphate. The catalysed reaction is 4-methyl-5-(2-phosphooxyethyl)-thiazole + 4-amino-2-methyl-5-(diphosphooxymethyl)pyrimidine + H(+) = thiamine phosphate + diphosphate. Its pathway is cofactor biosynthesis; thiamine diphosphate biosynthesis; thiamine phosphate from 4-amino-2-methyl-5-diphosphomethylpyrimidine and 4-methyl-5-(2-phosphoethyl)-thiazole: step 1/1. Functionally, condenses 4-methyl-5-(beta-hydroxyethyl)thiazole monophosphate (THZ-P) and 2-methyl-4-amino-5-hydroxymethyl pyrimidine pyrophosphate (HMP-PP) to form thiamine monophosphate (TMP). In Klebsiella pneumoniae subsp. pneumoniae (strain ATCC 700721 / MGH 78578), this protein is Thiamine-phosphate synthase.